We begin with the raw amino-acid sequence, 814 residues long: Testis-specific zinc finger protein topi (814 aa).

C2H2-type zinc fingers lie at residues 228-250, 275-297, 360-382, 429-453, 467-490, 511-533, 539-564, 570-592, 598-620, and 626-649; these read NECTMCDRKFVHASGLVRHMEKH, VKCNSCGRIFYDPQVAFRHGLIH, LQCEFCEYIFADIAELLVHSASH, FVCNVCELKFANTDLLQEHRCTSFH, LPCDFCDVNFEFAHDFLAHSEEKH, YLCDICGKSYTQSSHLWQHLRFH, FVCQEENCDRKFTIRPDLNDHIRKCH, YLCLVCGKRFLTGSVFYQHRLIH, YECEECGKRFYRADALKNHQRIH, and YSCLFCTKTFRQRGDRDKHIRARH. The disordered stretch occupies residues 669-705; the sequence is TAAAQKAQSHNPEQQDNDVAGGASTSDVPSGSGFMST. Polar residues predominate over residues 691–705; sequence ASTSDVPSGSGFMST.

As to quaternary structure, interacts with comr. In terms of tissue distribution, expressed in testis; primary spermatocytes.

The protein localises to the nucleus. In terms of biological role, required for male meiotic division and spermatid differentiation. Required for accumulation of aly and comr on chromatin. May function as a transcription factor. This Drosophila melanogaster (Fruit fly) protein is Testis-specific zinc finger protein topi (topi).